Reading from the N-terminus, the 912-residue chain is Alpha-actinin-4 (912 aa).

Positions methionine 1–histidine 267 are actin-binding. The segment at glutamine 12–glycine 27 is interaction with VCL. A disordered region spans residues glutamine 12 to aspartate 31. Positions asparagine 16–methionine 29 are enriched in gly residues. Tyrosine 32 carries the post-translational modification Phosphotyrosine. Residues arginine 41–asparagine 62 form an interaction with VCL region. Calponin-homology (CH) domains follow at residues lysine 51–alanine 155 and threonine 164–serine 270. The LXXLL motif motif lies at leucine 85–leucine 89. The interaction with VCL stretch occupies residues lysine 109–leucine 127. Lysine 115 is modified (N6-acetyllysine). The segment at threonine 178–tryptophan 193 is polyphosphoinositide (PIP2)-binding. Residue lysine 215 is modified to N6-acetyllysine. Position 250 is a phosphothreonine (threonine 250). Spectrin repeat units follow at residues histidine 294–asparagine 404, histidine 414–lysine 519, glutamine 529–glutamate 640, and histidine 650–asparagine 753. An N6-acetyllysine mark is found at lysine 593 and lysine 626. Serine 697 is subject to Phosphoserine. Residues tryptophan 737–leucine 912 form a mediates interaction with MICALL2 region. 2 EF-hand domains span residues glutamate 766–aspartate 801 and glutamine 807–aspartate 842. Aspartate 779 provides a ligand contact to Ca(2+). An N6-acetyllysine modification is found at lysine 780. Aspartate 781 and glutamate 790 together coordinate Ca(2+). Lysine 860 carries the post-translational modification N6-acetyllysine. The residue at position 910 (serine 910) is a Phosphoserine.

It belongs to the alpha-actinin family. As to quaternary structure, homodimer; antiparallel. Interacts with MAGI1. Interacts with PDLIM2. Identified in a complex with CASK, IQGAP1, MAGI2, NPHS1, SPTAN1 and SPTBN1. Identified in a IGF2BP1-dependent mRNP granule complex containing untranslated mRNAs. Component of the CART complex, at least composed of ACTN4, HGS/HRS, MYO5B and TRIM3. Binds TRIM3 at the N-terminus. Interacts with MICALL2 (preferentially in opened conformation); stimulated by RAB13 activation. Interacts with PPARG and RARA. Binds to VCL; this interaction triggers VCL conformational changes. Interacts with SEPTIN14. Interacts with IGSF8.

It is found in the nucleus. It localises to the cytoplasm. Its subcellular location is the cell junction. The protein localises to the cytoskeleton. The protein resides in the stress fiber. It is found in the perinuclear region. Its function is as follows. F-actin cross-linking protein which is thought to anchor actin to a variety of intracellular structures. This is a bundling protein. Probably involved in vesicular trafficking via its association with the CART complex. The CART complex is necessary for efficient transferrin receptor recycling but not for EGFR degradation. Involved in tight junction assembly in epithelial cells probably through interaction with MICALL2. Links MICALL2 to the actin cytoskeleton and recruits it to the tight junctions. May also function as a transcriptional coactivator, stimulating transcription mediated by the nuclear hormone receptors PPARG and RARA. Association with IGSF8 regulates the immune synapse formation and is required for efficient T-cell activation. The sequence is that of Alpha-actinin-4 from Mus musculus (Mouse).